We begin with the raw amino-acid sequence, 328 residues long: Beta-ketoacyl-[acyl-carrier-protein] synthase III (328 aa).

Residues Cys-122 and His-255 contribute to the active site. The ACP-binding stretch occupies residues 256–260; that stretch reads QANVR. Residue Asn-285 is part of the active site.

Belongs to the thiolase-like superfamily. FabH family. In terms of assembly, homodimer.

Its subcellular location is the cytoplasm. The enzyme catalyses malonyl-[ACP] + acetyl-CoA + H(+) = 3-oxobutanoyl-[ACP] + CO2 + CoA. Its pathway is lipid metabolism; fatty acid biosynthesis. Catalyzes the condensation reaction of fatty acid synthesis by the addition to an acyl acceptor of two carbons from malonyl-ACP. Catalyzes the first condensation reaction which initiates fatty acid synthesis and may therefore play a role in governing the total rate of fatty acid production. Possesses both acetoacetyl-ACP synthase and acetyl transacylase activities. Its substrate specificity determines the biosynthesis of branched-chain and/or straight-chain of fatty acids. The polypeptide is Beta-ketoacyl-[acyl-carrier-protein] synthase III (Bordetella avium (strain 197N)).